A 90-amino-acid polypeptide reads, in one-letter code: Cell division topological specificity factor (90 aa).

The protein belongs to the MinE family.

Prevents the cell division inhibition by proteins MinC and MinD at internal division sites while permitting inhibition at polar sites. This ensures cell division at the proper site by restricting the formation of a division septum at the midpoint of the long axis of the cell. The chain is Cell division topological specificity factor from Francisella tularensis subsp. tularensis (strain FSC 198).